The chain runs to 393 residues: MSNQKHIVLAGGGTAGHVNPLLAVAHVIRELEPEADIAVVGTAVGLERDLVPQAGFELETIEKVPFPRRPNKAALQFPAKWKAEKAKVRDILTRHQAQVVVGFGGYTSAPVYAAAHSMGIPIAIHEQNARAGMANKLGARWASMIGAAYAQPGLKPRRGVEVERVGLPLRPAIARLASDLEHDRTATRKAAAAQLGVDPDRPLVVITGGSLGAVNVNRAVAASAKDLLAHAQVIHLTGKGKDDEVRSLVSVSAGEDVLGELGPDHVSDGDYRVAPYLERIDLAFACADLIICRSGAGTVSELTALGLPAIYVPLPIGNGEQRFNAQPVVDAEGGLMVADGDFTPDWVRGHVPELLADPDKLSRYGANAWKYGIRDAAEVMAKRVLALIDQPAD.

UDP-N-acetyl-alpha-D-glucosamine-binding positions include Thr-14–Gly-16, Asn-128, Arg-170, Ser-210, and Gln-321.

It belongs to the glycosyltransferase 28 family. MurG subfamily.

It localises to the cell membrane. The catalysed reaction is di-trans,octa-cis-undecaprenyl diphospho-N-acetyl-alpha-D-muramoyl-L-alanyl-D-glutamyl-meso-2,6-diaminopimeloyl-D-alanyl-D-alanine + UDP-N-acetyl-alpha-D-glucosamine = di-trans,octa-cis-undecaprenyl diphospho-[N-acetyl-alpha-D-glucosaminyl-(1-&gt;4)]-N-acetyl-alpha-D-muramoyl-L-alanyl-D-glutamyl-meso-2,6-diaminopimeloyl-D-alanyl-D-alanine + UDP + H(+). Its pathway is cell wall biogenesis; peptidoglycan biosynthesis. Functionally, cell wall formation. Catalyzes the transfer of a GlcNAc subunit on undecaprenyl-pyrophosphoryl-MurNAc-pentapeptide (lipid intermediate I) to form undecaprenyl-pyrophosphoryl-MurNAc-(pentapeptide)GlcNAc (lipid intermediate II). In Bifidobacterium adolescentis (strain ATCC 15703 / DSM 20083 / NCTC 11814 / E194a), this protein is UDP-N-acetylglucosamine--N-acetylmuramyl-(pentapeptide) pyrophosphoryl-undecaprenol N-acetylglucosamine transferase.